Consider the following 345-residue polypeptide: NADH-quinone oxidoreductase subunit H (345 aa).

Helical transmembrane passes span 13 to 33, 84 to 104, 115 to 135, 161 to 181, 190 to 210, 248 to 268, 277 to 297, and 309 to 329; these read VLILAQVLAVIGFVMVSLLFL, FMLAPMTSFVLALLAWAVIPF, VAILFVFAISSLEVYGVIMGG, LGLIIIGVIISTGSMNFGGIV, FFSWYWLPHFPMVFLFFISCL, YIAIFLMCALTSLLFFGGWLS, VFWMIAKMAFFFFLFAMVKAI, and LGWKVFLPFSLVWVVFVAFAA.

The protein belongs to the complex I subunit 1 family. As to quaternary structure, NDH-1 is composed of 14 different subunits. Subunits NuoA, H, J, K, L, M, N constitute the membrane sector of the complex.

It is found in the cell inner membrane. It carries out the reaction a quinone + NADH + 5 H(+)(in) = a quinol + NAD(+) + 4 H(+)(out). Functionally, NDH-1 shuttles electrons from NADH, via FMN and iron-sulfur (Fe-S) centers, to quinones in the respiratory chain. The immediate electron acceptor for the enzyme in this species is believed to be ubiquinone. Couples the redox reaction to proton translocation (for every two electrons transferred, four hydrogen ions are translocated across the cytoplasmic membrane), and thus conserves the redox energy in a proton gradient. This subunit may bind ubiquinone. This is NADH-quinone oxidoreductase subunit H from Roseobacter denitrificans (strain ATCC 33942 / OCh 114) (Erythrobacter sp. (strain OCh 114)).